The following is a 178-amino-acid chain: Cytochrome b6-f complex iron-sulfur subunit 2 (178 aa).

The helical transmembrane segment at 17 to 36 threads the bilayer; the sequence is LLNFFTGAIVAATASAAIYP. One can recognise a Rieske domain in the interval 61–161; that stretch reads GHPIPASQIL…VQVKDDYIWI (101 aa). [2Fe-2S] cluster contacts are provided by Cys-107, His-109, Cys-125, and His-128. A disulfide bridge links Cys-112 with Cys-127.

Belongs to the Rieske iron-sulfur protein family. As to quaternary structure, the 4 large subunits of the cytochrome b6-f complex are cytochrome b6, subunit IV (17 kDa polypeptide, PetD), cytochrome f and the Rieske protein, while the 4 small subunits are PetG, PetL, PetM and PetN. The complex functions as a dimer. The cofactor is [2Fe-2S] cluster.

The protein localises to the cellular thylakoid membrane. It catalyses the reaction 2 oxidized [plastocyanin] + a plastoquinol + 2 H(+)(in) = 2 reduced [plastocyanin] + a plastoquinone + 4 H(+)(out). In terms of biological role, component of the cytochrome b6-f complex, which mediates electron transfer between photosystem II (PSII) and photosystem I (PSI), cyclic electron flow around PSI, and state transitions. In Trichormus variabilis (strain ATCC 29413 / PCC 7937) (Anabaena variabilis), this protein is Cytochrome b6-f complex iron-sulfur subunit 2.